The primary structure comprises 379 residues: AT-rich binding protein (379 aa).

The C2H2-type 1 zinc finger occupies 29–52 (IVCHTCQEELQTQDQFWKHIQDEH). The segment covering 114-124 (EQREVELHEAH) has biased composition (basic and acidic residues). Disordered regions lie at residues 114–148 (EQREVELHEAHQQQQQQQQQQLHQQQQQQQRDAAK) and 221–267 (PTAS…STTL). 3 stretches are compositionally biased toward low complexity: residues 125 to 143 (QQQQQQQQQQLHQQQQQQQ), 223 to 242 (ASFVSASGGSTSTTVSTTPP), and 249 to 262 (QQQQHQQQQQQQQQ). 2 consecutive C2H2-type zinc fingers follow at residues 312–336 (YICDYESCGLKFKYKSRMELHRVVH) and 342–365 (FNCDLCSASFKQSCNLSTHRKKKH).

It localises to the nucleus. Its function is as follows. May be a transcription factor for genes having (A+T) stretches in their promoter and/or enhancer regions. Binds to AT rich DNA. This chain is AT-rich binding protein, found in Drosophila willistoni (Fruit fly).